A 166-amino-acid polypeptide reads, in one-letter code: SUMO-conjugating enzyme UBC9 (166 aa).

Residues 4–157 form the UBC core domain; it reads IAAGRLAEER…VKKEAVKYAA (154 aa). Cysteine 93 serves as the catalytic Glycyl thioester intermediate.

This sequence belongs to the ubiquitin-conjugating enzyme family. In terms of assembly, interacts with brd-1 and rad-51. Interacts with smo-1 and sop-2. Interacts with bet-1 (via BROMO domain 2). Interacts with isoforms 1 and 2 of X-box-binding protein xbp-1.

It localises to the nucleus envelope. Its pathway is protein modification; protein sumoylation. Accepts the ubiquitin-like protein smo-1 from the aos-1-uba-2 E1 complex and catalyzes its covalent attachment to other proteins with the help of an E3 ligase such as gei-17. Required to sumoylate the ETS transcription factor lin-1, Polycomb protein sop-2, and intermediate filament proteins, such as ifb-1. Required for embryonic development, fertility, vulval morphogenesis, inhibition of vulval cell fates, lifespan, and neuromuscular activity. The chain is SUMO-conjugating enzyme UBC9 from Caenorhabditis elegans.